A 156-amino-acid polypeptide reads, in one-letter code: B3 domain-containing protein At5g26805 (156 aa).

Residues 57 to 155 (KFQLPMEKIR…MFCFSVLDGR (99 aa)) constitute a DNA-binding region (TF-B3).

Its subcellular location is the nucleus. This chain is B3 domain-containing protein At5g26805, found in Arabidopsis thaliana (Mouse-ear cress).